We begin with the raw amino-acid sequence, 644 residues long: Kelch-like protein 34 (644 aa).

A BTB domain is found at 29–96; that stretch reads CDVTLETEGS…IYTAWLSLSM (68 aa). The BACK domain occupies 131–238; the sequence is CCFAANVAAR…PADVLRRVYS (108 aa). Positions 304-329 are disordered; the sequence is AARGQVAAPEPEEEEEELEEEEEEEE. Residues 313-329 are compositionally biased toward acidic residues; the sequence is EPEEEEEELEEEEEEEE. 6 Kelch repeats span residues 320 to 366, 367 to 425, 426 to 473, 475 to 526, 528 to 571, and 573 to 623; these read ELEE…TAGN, FLFV…AVGE, RLLA…VGDR, VVYI…VLRG, VFAF…VVEE, and ALLL…VLQL.

The protein is Kelch-like protein 34 (KLHL34) of Homo sapiens (Human).